A 545-amino-acid polypeptide reads, in one-letter code: Probable protein kinase UbiB (545 aa).

Residues 124–502 (DFDETPLASA…RRSQGLARFY (379 aa)) form the Protein kinase domain. ATP contacts are provided by residues 130–138 (LASASIAQV) and lysine 153. Aspartate 288 acts as the Proton acceptor in catalysis. 2 consecutive transmembrane segments (helical) span residues 498 to 517 (LARFYFGIGATLVVCSAILF) and 521 to 540 (VETIPVASAAMGVTFWLLGW).

Belongs to the ABC1 family. UbiB subfamily.

Its subcellular location is the cell inner membrane. It participates in cofactor biosynthesis; ubiquinone biosynthesis [regulation]. Functionally, is probably a protein kinase regulator of UbiI activity which is involved in aerobic coenzyme Q (ubiquinone) biosynthesis. In Photobacterium profundum (strain SS9), this protein is Probable protein kinase UbiB.